A 723-amino-acid polypeptide reads, in one-letter code: MSMFNKVVKEFQWGQHKVRMETGEIARQAGGAVLVDVEDTVVLATVVAAKSPKPGQDFFPLTVDYIEKTYAAGKIPGGFFKREGRPSENETLTSRLIDRPLRPLFPEGFYNDVQVVVHVVSLNPEVPADIPALIGASAALAVSGIPFNGPVGAARVGYKDGQYLLNPTRSQIATSDLDLVVAGTERAVLMVESEANQLSEDVMLGAVVYGHEQMQTAINAIHELVREGGKPEWDWAPAAKNEPLIAKVTEVALPLLQEAYQLRQKSARSQKLKEVSANVAAALAEAGVEADKVEVGNIMFDLEAKIVRGQILNGEPRIDGRDTRTVRPIEIRSSVLPRAHGSALFTRGETQALVVATLGTKSDEQIIDALAGEYRDRFMLHYNMPPFATGETGRVGSPKRREIGHGRLAKRALIPVLPKEDEFAYTIRLVSEITESNGSSSMASVCGGCLALMDAGVPVKAHVAGVAMGLILEGNKFAVLTDILGDEDHLGDMDFKVAGTDNGITALQMDIKVQGITKEIMQVALAQAKEGRLHILSNMQEAMGHARTELSAHAPRMITMKIHPDKIREVIGKGGSTIQALTKETGTTIDIQEDGTITIASTSTEGMAEAKRRIEGITAEAEVGKIYAGTVLKLLDFGAIVNILPGKDGLLHISEIVNERVKDIKDWLKEGQQVRVKLIQADEKGRLRLSLKAALAEEGGSISPINAGESAAPAAPAGGSEQQ.

The Mg(2+) site is built by Asp-488 and Asp-494. The 60-residue stretch at 555 to 614 (PRMITMKIHPDKIREVIGKGGSTIQALTKETGTTIDIQEDGTITIASTSTEGMAEAKRRI) folds into the KH domain. In terms of domain architecture, S1 motif spans 624–692 (GKIYAGTVLK…EKGRLRLSLK (69 aa)). A disordered region spans residues 701–723 (SISPINAGESAAPAAPAGGSEQQ). Positions 707–723 (AGESAAPAAPAGGSEQQ) are enriched in low complexity.

The protein belongs to the polyribonucleotide nucleotidyltransferase family. It depends on Mg(2+) as a cofactor.

Its subcellular location is the cytoplasm. The catalysed reaction is RNA(n+1) + phosphate = RNA(n) + a ribonucleoside 5'-diphosphate. Functionally, involved in mRNA degradation. Catalyzes the phosphorolysis of single-stranded polyribonucleotides processively in the 3'- to 5'-direction. This Cupriavidus taiwanensis (strain DSM 17343 / BCRC 17206 / CCUG 44338 / CIP 107171 / LMG 19424 / R1) (Ralstonia taiwanensis (strain LMG 19424)) protein is Polyribonucleotide nucleotidyltransferase.